Here is a 699-residue protein sequence, read N- to C-terminus: Elongation factor G (699 aa).

The tr-type G domain maps to Glu8–Ile288. GTP-binding positions include Ala17–Thr24, Asp86–His90, and Asn140–Asp143.

This sequence belongs to the TRAFAC class translation factor GTPase superfamily. Classic translation factor GTPase family. EF-G/EF-2 subfamily.

It localises to the cytoplasm. In terms of biological role, catalyzes the GTP-dependent ribosomal translocation step during translation elongation. During this step, the ribosome changes from the pre-translocational (PRE) to the post-translocational (POST) state as the newly formed A-site-bound peptidyl-tRNA and P-site-bound deacylated tRNA move to the P and E sites, respectively. Catalyzes the coordinated movement of the two tRNA molecules, the mRNA and conformational changes in the ribosome. In Sinorhizobium fredii (strain NBRC 101917 / NGR234), this protein is Elongation factor G.